A 137-amino-acid polypeptide reads, in one-letter code: Histone H2B.1, sperm (137 aa).

The segment at 1–43 is disordered; it reads MPSQKSPTKRSPTKRSPQKGGKGAKRGGKAGKRRRGVAVKRRR. 3 short sequence motifs (SPKK motif) span residues 6 to 9, 11 to 14, and 16 to 19; these read SPTK and SPQK. A compositionally biased stretch (basic residues) spans 7-43; the sequence is PTKRSPTKRSPQKGGKGAKRGGKAGKRRRGVAVKRRR. Ser11 and Ser16 each carry phosphoserine. The O-linked (GlcNAc) serine glycan is linked to Ser124. Lys132 is covalently cross-linked (Glycyl lysine isopeptide (Lys-Gly) (interchain with G-Cter in ubiquitin)).

It belongs to the histone H2B family. In terms of assembly, the nucleosome is a histone octamer containing two molecules each of H2A, H2B, H3 and H4 assembled in one H3-H4 heterotetramer and two H2A-H2B heterodimers. The octamer wraps approximately 147 bp of DNA. In terms of processing, monoubiquitination of Lys-132 gives a specific tag for epigenetic transcriptional activation and is also prerequisite for histone H3 'Lys-4' and 'Lys-79' methylation. Phosphorylated on SPKK motifs 2 and 3; which may regulate DNA binding. Dephosphorylated during maturation of spermatids to mature sperm and rephosphorylated at fertilization. Post-translationally, glcNAcylation at Ser-124 promotes monoubiquitination of Lys-132. It fluctuates in response to extracellular glucose, and associates with transcribed genes.

The protein localises to the nucleus. Its subcellular location is the chromosome. Core component of nucleosome. Nucleosomes wrap and compact DNA into chromatin, limiting DNA accessibility to the cellular machineries which require DNA as a template. Histones thereby play a central role in transcription regulation, DNA repair, DNA replication and chromosomal stability. DNA accessibility is regulated via a complex set of post-translational modifications of histones, also called histone code, and nucleosome remodeling. The protein is Histone H2B.1, sperm of Psammechinus miliaris (Green sea urchin).